The following is an 89-amino-acid chain: Cell division topological specificity factor (89 aa).

Belongs to the MinE family.

Prevents the cell division inhibition by proteins MinC and MinD at internal division sites while permitting inhibition at polar sites. This ensures cell division at the proper site by restricting the formation of a division septum at the midpoint of the long axis of the cell. The protein is Cell division topological specificity factor of Klebsiella pneumoniae (strain 342).